Consider the following 198-residue polypeptide: FMN-dependent NADH:quinone oxidoreductase (198 aa).

Residues 92 to 95 and 136 to 139 each bind FMN; these read MWNL and SRGG.

This sequence belongs to the azoreductase type 1 family. Homodimer. The cofactor is FMN.

The catalysed reaction is 2 a quinone + NADH + H(+) = 2 a 1,4-benzosemiquinone + NAD(+). It catalyses the reaction N,N-dimethyl-1,4-phenylenediamine + anthranilate + 2 NAD(+) = 2-(4-dimethylaminophenyl)diazenylbenzoate + 2 NADH + 2 H(+). Its function is as follows. Quinone reductase that provides resistance to thiol-specific stress caused by electrophilic quinones. In terms of biological role, also exhibits azoreductase activity. Catalyzes the reductive cleavage of the azo bond in aromatic azo compounds to the corresponding amines. The polypeptide is FMN-dependent NADH:quinone oxidoreductase (Clostridium perfringens (strain ATCC 13124 / DSM 756 / JCM 1290 / NCIMB 6125 / NCTC 8237 / Type A)).